A 494-amino-acid polypeptide reads, in one-letter code: Cysteine--tRNA ligase (494 aa).

Zn(2+) is bound at residue C29. The short motif at 31–41 is the 'HIGH' region element; it reads VTVYDYCHLGH. Zn(2+)-binding residues include C216, H241, and E245. The 'KMSKS' region signature appears at 273-277; sequence KMSKS. An ATP-binding site is contributed by K276.

The protein belongs to the class-I aminoacyl-tRNA synthetase family. Monomer. Zn(2+) is required as a cofactor.

It localises to the cytoplasm. The catalysed reaction is tRNA(Cys) + L-cysteine + ATP = L-cysteinyl-tRNA(Cys) + AMP + diphosphate. The protein is Cysteine--tRNA ligase of Cyanothece sp. (strain PCC 7425 / ATCC 29141).